The sequence spans 279 residues: Tryptophan 2,3-dioxygenase (279 aa).

Residues 48–52, Y110, and R114 each bind substrate; that span reads FIVIH. H237 is a binding site for heme. T251 provides a ligand contact to substrate.

It belongs to the tryptophan 2,3-dioxygenase family. In terms of assembly, homotetramer. Heme is required as a cofactor.

The catalysed reaction is L-tryptophan + O2 = N-formyl-L-kynurenine. It participates in amino-acid degradation; L-tryptophan degradation via kynurenine pathway; L-kynurenine from L-tryptophan: step 1/2. Its function is as follows. Heme-dependent dioxygenase that catalyzes the oxidative cleavage of the L-tryptophan (L-Trp) pyrrole ring and converts L-tryptophan to N-formyl-L-kynurenine. Catalyzes the oxidative cleavage of the indole moiety. This Bacillus thuringiensis subsp. konkukian (strain 97-27) protein is Tryptophan 2,3-dioxygenase.